Here is a 142-residue protein sequence, read N- to C-terminus: Coiled-coil-helix-coiled-coil-helix domain-containing protein 10, mitochondrial (142 aa).

The N-terminal 16 residues, Met1 to Pro16, are a transit peptide targeting the mitochondrion. Over residues Met1–Ser20 the composition is skewed to low complexity. 2 disordered regions span residues Met1 to Met45 and Ala68 to Leu97. Residues Ala21 to Ser39 are compositionally biased toward pro residues. A compositionally biased stretch (low complexity) spans Pro80–Thr90. One can recognise a CHCH domain in the interval Met99–Ser140. 2 consecutive short sequence motifs (cx9C motif) follow at residues Cys102–Cys112 and Cys122–Cys132. 2 cysteine pairs are disulfide-bonded: Cys102–Cys132 and Cys112–Cys122.

Ubiquitously expressed. Higher expression is observed in heart and liver.

The protein resides in the mitochondrion intermembrane space. In terms of biological role, may be involved in the maintenance of mitochondrial organization and mitochondrial cristae structure. This is Coiled-coil-helix-coiled-coil-helix domain-containing protein 10, mitochondrial (CHCHD10) from Homo sapiens (Human).